The following is a 1167-amino-acid chain: MTNPTILYPSYHNVLAHPIRLDSFFDPFVETFKDLKGAWEEFGKTGYMDPLKQHLQIAWDTSQNGTVDYLALTKASISLIGLIPGADAVVPFINMFVDFIFPKLFGRGSQQNAQAQFFELIIEKVKELVDEDFRNFTLNNLLNYLDGMQTALSHFQNDVQIAICQGEQPGLMLDQTPTACTPTTDHLISVRESFKDARTTIETALPHFKNPMLSTNDNTPDFNSDTVLLTLPMYTTGATLNLILHQGYIQFAERWKSVNYDESFINQTKVDLQRRIQDYSTTVSTTFEKFKPTLNPSNKESVNKYNRYVRSMTLQSLDIAATWPTLDNVNYPSNVDIQLDQTRLVFSDVAGPWEGNDNITSNIIDVLTPINTGIGFQESSDLRKFTYPRIELQSMQFHGQYVNSKSVEHCYSDGLKLNYKNKTITAGVSNIDESNQNNKHNYGPVINSPITDINVNSQNSQYLDLNSVMVNGGQKVTGCSPLSSNGNSNNAALPNQKINVIYSVQSNDKPEKHADTYRKWGYMSSHIPYDLVPENVIGDIDPDTKQPSLLLKGFPAEKGYGDSIAYVSEPLNGANAVKLTSYQVLQMEVTNQTTQKYRIRIRYATGGDTAASIWFHIIGPSGNDLTNEGHNFSSVSSRNKMFVQGNNGKYVLNILTDSIELPSGQQTILIQNTNSQDLFLDRIEFISLPSTSTPTSTNFVEPESLEKIINQVNQLFSSSSQTELAHTVSDYKIDQVVLKVNALSDDVFGVEKKALRKLVNQAKQLSKARNVLVGGNFEKGHEWALSREATMVANHELFKGDHLLLPPPTLYPSYAYQKIDESKLKSNTRYTVSGFIAQSEHLEVVVSRYGKEVHDMLDIPYEEALPISSDESPNCCKPAACQCSSCDGSQSDSHFFSYSIDVGSLQSDVNLGIEFGLRIAKPNGFAKISNLEIKEDRPLTEKEIKKVQRKEQKWKKAFNQEQAEVATTLQPTLDQINALYQNEDWNGSVHPASDYQHLSAVVVPTLPKQRHWFMEGREGEHVVLTQQFQQALDRAFQQIEEQNLIHNGNLANGLTDWTVTGDAQLTIFDEDPVLELAHWDASISQTIEIMDFEGRHRIQTACTWKRQRNSYRSTWRKRLETMTFNTTSFTTQEQTFYFEGDTVDVHVQSENNTFLIDSVELIEIIEE.

This sequence belongs to the delta endotoxin family.

Its function is as follows. Endotoxin with nematicidal activity. The sequence is that of Pesticidal crystal protein Cry21Aa (cry21Aa) from Bacillus thuringiensis.